The sequence spans 875 residues: Serine/threonine-protein phosphatase 4 regulatory subunit 4 (875 aa).

HEAT repeat units follow at residues 215–253 and 254–292; these read ILPL…TKNV and VLPE…RSQT. The stretch at 686-730 forms a coiled coil; sequence MFQKKNYEKDLLDQEKEREELLFLEMEQLEKEKHQSDGRLASDKS. Over residues 718-739 the composition is skewed to basic and acidic residues; it reads KHQSDGRLASDKSFEKKRRDSR. Residues 718–773 form a disordered region; that stretch reads KHQSDGRLASDKSFEKKRRDSRTSTQSLSKNLPISVPGPSSSTASTSKEIKKSKLT. Residues 740 to 764 show a composition bias toward polar residues; the sequence is TSTQSLSKNLPISVPGPSSSTASTS. The residue at position 777 (Ser-777) is a Phosphoserine. Position 799 is a phosphothreonine (Thr-799). The span at 825 to 859 shows a compositional bias: polar residues; it reads RNASSVPASFSPNPVMPSTSRGPGNTADPKSSGSK. The segment at 825–875 is disordered; it reads RNASSVPASFSPNPVMPSTSRGPGNTADPKSSGSKDAQPRKATLKSRKSNP. Positions 866-875 are enriched in basic residues; the sequence is ATLKSRKSNP.

In terms of assembly, serine/threonine-protein phosphatase 4 (PP4) occurs in different assemblies of the catalytic and one or more regulatory subunits. Component of the PP4 complex PPP4C-PPP4R4.

It localises to the cytoplasm. Putative regulatory subunit of serine/threonine-protein phosphatase 4. The chain is Serine/threonine-protein phosphatase 4 regulatory subunit 4 (Ppp4r4) from Mus musculus (Mouse).